The sequence spans 565 residues: Thiol:disulfide interchange protein DsbD (565 aa).

Positions 1–19 (MAQRIFTLILLLCSTSVFA) are cleaved as a signal peptide. Cystine bridges form between Cys-122/Cys-128 and Cys-182/Cys-304. A run of 7 helical transmembrane segments spans residues 163–183 (LPFSALWALLIGIGIAFTPCV), 208–228 (LLTFIYVQGMALTYTALGLVV), 243–263 (YVLIGLAIVFTLLAMSMFGLF), 289–309 (GVFIMGAIAGLICSPCTTAPL), 323–343 (WLGGGTLYLYALGMGLPLMLI), 357–377 (WMEQVKTAFGFVILALPVFLL), and 384–404 (IWGLRLWSALGVAFFGWAFIT). Residues 434–565 (WAFGETHTAQ…FSAHLRDRQP (132 aa)) enclose the Thioredoxin domain. A disulfide bridge connects residues Cys-480 and Cys-483.

This sequence belongs to the thioredoxin family. DsbD subfamily.

The protein resides in the cell inner membrane. It catalyses the reaction [protein]-dithiol + NAD(+) = [protein]-disulfide + NADH + H(+). It carries out the reaction [protein]-dithiol + NADP(+) = [protein]-disulfide + NADPH + H(+). Required to facilitate the formation of correct disulfide bonds in some periplasmic proteins and for the assembly of the periplasmic c-type cytochromes. Acts by transferring electrons from cytoplasmic thioredoxin to the periplasm. This transfer involves a cascade of disulfide bond formation and reduction steps. The protein is Thiol:disulfide interchange protein DsbD of Escherichia coli O6:K15:H31 (strain 536 / UPEC).